The primary structure comprises 296 residues: Glycine--tRNA ligase alpha subunit (296 aa).

It belongs to the class-II aminoacyl-tRNA synthetase family. In terms of assembly, tetramer of two alpha and two beta subunits.

It is found in the cytoplasm. It catalyses the reaction tRNA(Gly) + glycine + ATP = glycyl-tRNA(Gly) + AMP + diphosphate. The sequence is that of Glycine--tRNA ligase alpha subunit from Polynucleobacter necessarius subsp. necessarius (strain STIR1).